The primary structure comprises 365 residues: Chorismate synthase (365 aa).

NADP(+) is bound by residues Arg48 and Arg54. FMN is bound by residues 125–127, 238–239, Gly278, 293–297, and Arg319; these read RSS, NA, and KPTSS.

The protein belongs to the chorismate synthase family. As to quaternary structure, homotetramer. FMNH2 serves as cofactor.

It catalyses the reaction 5-O-(1-carboxyvinyl)-3-phosphoshikimate = chorismate + phosphate. It participates in metabolic intermediate biosynthesis; chorismate biosynthesis; chorismate from D-erythrose 4-phosphate and phosphoenolpyruvate: step 7/7. Its function is as follows. Catalyzes the anti-1,4-elimination of the C-3 phosphate and the C-6 proR hydrogen from 5-enolpyruvylshikimate-3-phosphate (EPSP) to yield chorismate, which is the branch point compound that serves as the starting substrate for the three terminal pathways of aromatic amino acid biosynthesis. This reaction introduces a second double bond into the aromatic ring system. In Alteromonas mediterranea (strain DSM 17117 / CIP 110805 / LMG 28347 / Deep ecotype), this protein is Chorismate synthase.